Consider the following 289-residue polypeptide: Protein charybde (289 aa).

Residues 119 to 142 (TAHHPGHGHGPGPSPMPASPLQST) are disordered.

It belongs to the DDIT4 family.

Its subcellular location is the cytoplasm. Functionally, inhibits cell growth by regulating the Tor pathway upstream of the Tsc1-Tsc2 complex and downstream of Akt1. Acts as a cell death activator during head development. The chain is Protein charybde (chrb) from Drosophila pseudoobscura pseudoobscura (Fruit fly).